Here is a 244-residue protein sequence, read N- to C-terminus: MTSILVSRFKISALTLQYATSDSVNFCRIPCRGCDEKFLQCWLVASFHCGKGGPQFQKAKRVFLVRYTGGGIIVLRDSWGYRPFPMKGNVGARCVPEGLKSSPHTRGFRCLAASLECYSAKSFLGPLLCSPQKRGPMQKHNIRGDTLGKSPPCGPKGNFKGLPLVIFDGVPGVGGGLWPGKLGGKTPLFFSSNCFSGKESNPPVYKTGNLCGEKSPKKEETFKNFFFFPDPFNPNEQNFSSFLN.

Positions 1 to 23 are cleaved as a signal peptide; it reads MTSILVSRFKISALTLQYATSDS. In terms of domain architecture, SCP spans 67-194; it reads YTGGGIIVLR…KTPLFFSSNC (128 aa). Residues 143–145 carry the Cell attachment site motif; it reads RGD.

Belongs to the CRISP family. In terms of tissue distribution, expressed in salivary glands.

Its subcellular location is the secreted. Its function is as follows. Inhibits platelet aggregation induced by all agonists tested (ADP, arachidonic acid, the thromboxane A2 analog U46619, thrombin, and snake venom snaclecs (TMVA that activates platelet through GPIB, and stejnulxin that specifically acts through GPVI (GP6))). May act by competing with fibrinogen for binding to glycoprotein IIb/IIIa (ITGA2B/ITGB3). The chain is Tabinhibitin 8 from Tabanus yao (Horsefly).